Reading from the N-terminus, the 1961-residue chain is Myosin-9 (1961 aa).

Alanine 2 is subject to N-acetylalanine. The interval 2–838 is mediates interaction with LIMCH1; it reads AQQAADKYLY…RLFTKVKPLL (837 aa). N6-acetyllysine is present on lysine 8. At tyrosine 11 the chain carries Phosphotyrosine. The Myosin N-terminal SH3-like domain occupies 27–77; it reads GAKKLVWVPSTKNGFEPASLKEEVGEEAIVELVENGKKVKVNKDDIQKMNP. The region spanning 81 to 776 is the Myosin motor domain; the sequence is SKVEDMAELT…VLAHLEEERD (696 aa). The residue at position 102 (lysine 102) is an N6-acetyllysine. Position 174 to 181 (174 to 181) interacts with ATP; that stretch reads GESGAGKT. Lysine 299, lysine 435, and lysine 613 each carry N6-acetyllysine. Phosphoserine is present on serine 628. Positions 654–676 are actin-binding; the sequence is LAKLMATLRNTNPNFVCCIIPNH. Residue tyrosine 754 is modified to Phosphotyrosine. The IQ domain occupies 779–808; it reads ITDVIIGFQACCRGYLARKAFAKRQQQLTA. A coiled-coil region spans residues 841–1927; it reads IRHEDELLAK…LKNKLRRGDM (1087 aa). Lysine 850 carries the post-translational modification N6-succinyllysine. Lysine 860, lysine 975, and lysine 1024 each carry N6-acetyllysine. The segment covering 1035–1055 has biased composition (basic and acidic residues); sequence RLRREEKQRQELEKTRRKLEG. The segment at 1035-1057 is disordered; sequence RLRREEKQRQELEKTRRKLEGDS. Residue serine 1114 is modified to Phosphoserine. Residues lysine 1234 and lysine 1249 each carry the N6-acetyllysine modification. Residues 1331–1353 form a disordered region; sequence LKQMEDEKNSFREQLEEEEEEAK. Positions 1332–1344 are enriched in basic and acidic residues; the sequence is KQMEDEKNSFREQ. N6-acetyllysine is present on residues lysine 1358, lysine 1393, lysine 1405, lysine 1411, lysine 1460, and lysine 1639. Residue lysine 1670 is modified to N6-succinyllysine. Serine 1715 bears the Phosphoserine mark. N6-acetyllysine is present on residues lysine 1794, lysine 1803, and lysine 1846. The tract at residues 1878-1910 is disordered; that stretch reads RQLEEAEEEAQRANASRRKLQRELEDATETADA. An Omega-N-methylarginine modification is found at arginine 1924. The tract at residues 1938 to 1961 is disordered; it reads KGTGDCSDEEVDGKADGADAKATE. The residue at position 1944 (serine 1944) is a Phosphoserine. Basic and acidic residues predominate over residues 1949–1961; the sequence is DGKADGADAKATE.

It belongs to the TRAFAC class myosin-kinesin ATPase superfamily. Myosin family. In terms of assembly, myosin is a hexameric protein that consists of 2 heavy chain subunits (MHC), 2 alkali light chain subunits (MLC) and 2 regulatory light chain subunits (MLC-2). Interacts with RASIP1. Interacts with DDR1. Interacts with PDLIM2. Interacts with SVIL. Interacts with HTRA3. Interacts with Myo7a. Interacts with CFAP95. Interacts with LIMCH1; independently of the integration of MYH9 into the myosin complex. Interacts with RAB3A. Interacts with ZBED4. Interacts with S100A4; this interaction increases cell motility. ISGylated. In terms of processing, ubiquitination.

It is found in the cytoplasm. It localises to the cytoskeleton. The protein resides in the cell cortex. The protein localises to the cytoplasmic vesicle. Its subcellular location is the secretory vesicle. It is found in the cortical granule. Its function is as follows. Cellular myosin that appears to play a role in cytokinesis, cell shape, and specialized functions such as secretion and capping. Required for cortical actin clearance prior to oocyte exocytosis. Promotes cell motility in conjunction with S100A4. During cell spreading, plays an important role in cytoskeleton reorganization, focal contact formation (in the margins but not the central part of spreading cells), and lamellipodial retraction; this function is mechanically antagonized by MYH10. The sequence is that of Myosin-9 (Myh9) from Rattus norvegicus (Rat).